The sequence spans 44 residues: Keratin-associated protein 20-3 (44 aa).

The protein belongs to the KRTAP type 20 family. In terms of assembly, interacts with hair keratins.

Its function is as follows. In the hair cortex, hair keratin intermediate filaments are embedded in an interfilamentous matrix, consisting of hair keratin-associated proteins (KRTAP), which are essential for the formation of a rigid and resistant hair shaft through their extensive disulfide bond cross-linking with abundant cysteine residues of hair keratins. The matrix proteins include the high-sulfur and high-glycine-tyrosine keratins. This Homo sapiens (Human) protein is Keratin-associated protein 20-3 (KRTAP20-3).